Here is a 349-residue protein sequence, read N- to C-terminus: Isopentenyl-diphosphate delta-isomerase (349 aa).

A substrate-binding site is contributed by 6–7 (RK). FMN is bound by residues 62-64 (AMT), Ser-93, and Asn-122. Substrate is bound at residue Gln-152. Glu-153 contributes to the Mg(2+) binding site. FMN-binding positions include Lys-184, Thr-214, 258–259 (GG), and 280–281 (AG).

Belongs to the IPP isomerase type 2 family. In terms of assembly, homooctamer. Dimer of tetramers. It depends on FMN as a cofactor. Requires NADPH as cofactor. Mg(2+) serves as cofactor.

It localises to the cytoplasm. The catalysed reaction is isopentenyl diphosphate = dimethylallyl diphosphate. Its function is as follows. Involved in the biosynthesis of isoprenoids. Catalyzes the 1,3-allylic rearrangement of the homoallylic substrate isopentenyl (IPP) to its allylic isomer, dimethylallyl diphosphate (DMAPP). The polypeptide is Isopentenyl-diphosphate delta-isomerase (Bacillus cereus (strain AH820)).